A 533-amino-acid polypeptide reads, in one-letter code: Heterogeneous nuclear ribonucleoprotein Q (533 aa).

A2 carries the N-acetylalanine modification. S69 is subject to Phosphoserine. 3 RRM domains span residues 72–151 (TEIF…ISVA), 153–235 (NRLF…WADP), and 248–318 (KVLF…FAKP). Residue K78 forms a Glycyl lysine isopeptide (Lys-Gly) (interchain with G-Cter in SUMO2) linkage. K131 is subject to N6-acetyllysine. Position 273 is an N6-acetyllysine (K273). Phosphotyrosine is present on Y283. Positions 310-471 (NIEIVFAKPP…GARGGRGGNV (162 aa)) are interaction with APOBEC1. R354 is modified (asymmetric dimethylarginine; by PRMT1; alternate). R354 carries the omega-N-methylarginine; by PRMT1; alternate modification. 6 consecutive repeat copies span residues 358 to 360 (RGG), 361 to 363 (RGG), 370 to 374 (YYGYE), 379 to 382 (YYGY), 388 to 390 (RGG), and 395 to 398 (YYGY). Positions 358–469 (RGGRGGYGYP…VRGARGGRGG (112 aa)) are 8 X 3 AA repeats of R-G-G. The 3 X 4 AA repeats of Y-Y-G-Y stretch occupies residues 370 to 398 (YYGYEDYYDYYGYDYHNYRGGYEDPYYGY). An Omega-N-methylarginine; by PRMT1 modification is found at R406. A disordered region spans residues 407–533 (GRGGRGARGA…YQDTFGQQWK (127 aa)). One copy of the 1-4 repeat lies at 408–410 (RGG). The segment covering 414 to 432 (RGAAPSRGRGAAPPRGRAG) has biased composition (low complexity). An Asymmetric dimethylarginine; by PRMT1 modification is found at R420. R428 carries the asymmetric dimethylarginine; by PRMT1; alternate modification. R428 carries the omega-N-methylarginine; by PRMT1; alternate modification. The interval 428–459 (RGRAGYSQRGGPGSARGVRGARGGAQQQRGRG) is interaction with SMN. An Asymmetric dimethylarginine; alternate modification is found at R436. R436 is modified (omega-N-methylarginine; alternate). Residues 436 to 438 (RGG) form a 1-5 repeat. 2 positions are modified to asymmetric dimethylarginine; by PRMT1; alternate: R446 and R449. R446 and R449 each carry omega-N-methylarginine; by PRMT1; alternate. 3 repeat units span residues 449–451 (RGG), 464–466 (RGG), and 467–469 (RGG). The segment covering 460 to 472 (VRGARGGRGGNVG) has biased composition (gly residues). The Bipartite nuclear localization signal motif lies at 474-488 (KRKADGYNQPDSKRR). Polar residues predominate over residues 490–505 (TNNQNWGSQPIAQQPL). Position 497 is a phosphoserine (S497). A Glycyl lysine isopeptide (Lys-Gly) (interchain with G-Cter in SUMO2) cross-link involves residue K517.

Identified in a histone pre-mRNA complex, at least composed of ERI1, LSM11, SLBP, SNRPB, SYNCRIP and YBX1. Identified in the spliceosome C complex. Component of the coding region determinant (CRD)-mediated complex, composed of DHX9, HNRNPU, IGF2BP1, SYNCRIP and YBX1. Identified in a mRNP complex, at least composed of DHX9, DDX3X, ELAVL1, HNRNPU, IGF2BP1, ILF3, PABPC1, PCBP2, PTBP2, STAU1, STAU2, SYNCRIP and YBX1. Identified in a mRNP granule complex, at least composed of ACTB, ACTN4, DHX9, ERG, HNRNPA1, HNRNPA2B1, HNRNPAB, HNRNPD, HNRNPL, HNRNPR, HNRNPU, HSPA1, HSPA8, IGF2BP1, ILF2, ILF3, NCBP1, NCL, PABPC1, PABPC4, PABPN1, RPLP0, RPS3, RPS3A, RPS4X, RPS8, RPS9, SYNCRIP, YBX1 and untranslated mRNAs. Component of the APOB mRNA editosome. Interacts with APOBEC1 and A1CF. Part of a complex associated with the FOS mCRD domain and consisting of PABPC1, PAIP1, CSDE1/UNR, HNRPD and SYNCRIP. Interacts with HNRPR, SMN, POLR2A hyperphosphorylated C-terminal domain, minute virus of mice (MVM) NS1 protein and through its C-terminal domain with SYT7, SYT8 and SYT9. The non-phosphorylated and phosphorylated forms are colocalized with PAIP1 in polysomes. Interacts with GTPBP1. Interacts with HABP4. Phosphorylated on tyrosine. The membrane-bound form found in microsomes is phosphorylated in vitro by insulin receptor tyrosine kinase (INSR). Phosphorylation is inhibited upon binding to RNA, whereas the cytoplasmic form is poorly phosphorylated.

The protein resides in the nucleus. It localises to the nucleoplasm. The protein localises to the cytoplasm. It is found in the microsome. Its function is as follows. Heterogenous nuclear ribonucleoprotein (hnRNP) implicated in mRNA processing mechanisms. Component of the CRD-mediated complex that promotes MYC mRNA stability. Is associated in vitro with pre-mRNA, splicing intermediates and mature mRNA protein complexes. Binds to apoB mRNA AU-rich sequences. Part of the APOB mRNA editosome complex and may modulate the postranscriptional C to U RNA-editing of the APOB mRNA through either by binding to A1CF (APOBEC1 complementation factor), to APOBEC1 or to RNA itself. May be involved in translationally coupled mRNA turnover. Implicated with other RNA-binding proteins in the cytoplasmic deadenylation/translational and decay interplay of the FOS mRNA mediated by the major coding-region determinant of instability (mCRD) domain. Interacts in vitro preferentially with poly(A) and poly(U) RNA sequences. May be involved in cytoplasmic vesicle-based mRNA transport through interaction with synaptotagmins. The polypeptide is Heterogeneous nuclear ribonucleoprotein Q (Syncrip) (Rattus norvegicus (Rat)).